A 438-amino-acid polypeptide reads, in one-letter code: Cell division cycle-associated 7-like protein (438 aa).

An Integrase domain-binding motif 1 (IBM1) motif is present at residues 9–33 (IPKEVADIFSAPSDDEEFVGFQDDV). Phosphoserine is present on Ser-21. Residues 56-115 (VCFRSKYFTEELRRIFKEDTDSEMEDFEGFTESELNMSSNPELMESELSDSDKAYPVMND) are PSIP1-binding. The Integrase domain-binding motif 2 (IBM2) motif lies at 63-89 (FTEELRRIFKEDTDSEMEDFEGFTESE). Residues 74–199 (DTDSEMEDFE…ESRAESQENS (126 aa)) form a disordered region. Thr-75 bears the Phosphothreonine mark. A compositionally biased stretch (acidic residues) spans 75-86 (TDSEMEDFEGFT). Ser-77 carries the post-translational modification Phosphoserine. At Thr-86 the chain carries Phosphothreonine. Ser-101, Ser-104, Ser-135, Ser-136, and Ser-159 each carry phosphoserine. Residues 152 to 167 (RTPDKDSSHLLDSKTD) are compositionally biased toward basic and acidic residues. Over residues 168–177 (LRRKKSSRQP) the composition is skewed to basic residues. 2 positions are modified to phosphoserine: Ser-183 and Ser-185. The interval 201-223 (ALLKRAMNIKENKAMLAQLLAEL) is MYC-binding. Glycyl lysine isopeptide (Lys-Gly) (interchain with G-Cter in SUMO2) cross-links involve residues Lys-210 and Lys-213. Ser-249 bears the Phosphoserine mark.

Interacts with MYC. Interacts (via IBM motifs) with PSIP1 (via IBD domain); phosphorylation increases its affinity for PSIP1. Post-translationally, phosphorylation increases its interaction with PSIP1. Expressed in all tissues but not detected in total brain.

The protein localises to the cytoplasm. Its subcellular location is the nucleus. Plays a role in transcriptional regulation as a repressor that inhibits monoamine oxidase A (MAOA) activity and gene expression by binding to the promoter. Plays an important oncogenic role in mediating the full transforming effect of MYC in medulloblastoma cells. Involved in apoptotic signaling pathways; May act downstream of P38-kinase and BCL-2, but upstream of CASP3/caspase-3 as well as CCND1/cyclin D1 and E2F1. The chain is Cell division cycle-associated 7-like protein (Cdca7l) from Mus musculus (Mouse).